The sequence spans 58 residues: Parvalbumin beta 3 (58 aa).

Position 1 is an N-acetylalanine (alanine 1). The 35-residue stretch at 24–58 (FNYKTFFKFFAIIDQDHSGFIEEEELKALSDAETK) folds into the EF-hand domain. Aspartate 37, aspartate 39, serine 41, phenylalanine 43, glutamate 45, and glutamate 48 together coordinate Ca(2+).

The protein belongs to the parvalbumin family.

In muscle, parvalbumin is thought to be involved in relaxation after contraction. It binds two calcium ions. In Merluccius senegalensis (Senegalese hake), this protein is Parvalbumin beta 3.